Here is a 775-residue protein sequence, read N- to C-terminus: ATP-dependent 6-phosphofructokinase 2 (775 aa).

The N-terminal catalytic PFK domain 1 stretch occupies residues 1 to 390 (MTNTILDTYS…YHSAYRHLNT (390 aa)). ATP is bound by residues glycine 25, 88-89 (RC), and 118-121 (GDGS). Aspartate 119 contacts Mg(2+). Substrate-binding positions include 164 to 166 (SID), arginine 201, 208 to 210 (MGR), glutamate 264, arginine 292, and 298 to 301 (HIQR). Catalysis depends on aspartate 166, which acts as the Proton acceptor. Positions 391 to 404 (SDHPKMVLPEDKRM) are interdomain linker. Residues 405–775 (RVAIIHVGAP…GRSSLYAIPN (371 aa)) are C-terminal regulatory PFK domain 2. Beta-D-fructose 2,6-bisphosphate-binding positions include 537–541 (SMSNN), 582–584 (QGA), aspartate 640, and 672–675 (HFQQ).

The protein belongs to the phosphofructokinase type A (PFKA) family. ATP-dependent PFK group I subfamily. Eukaryotic two domain clade 'E' sub-subfamily. As to quaternary structure, homotetramer. The cofactor is Mg(2+).

It localises to the cytoplasm. It catalyses the reaction beta-D-fructose 6-phosphate + ATP = beta-D-fructose 1,6-bisphosphate + ADP + H(+). The protein operates within carbohydrate degradation; glycolysis; D-glyceraldehyde 3-phosphate and glycerone phosphate from D-glucose: step 3/4. With respect to regulation, allosterically activated by ADP, AMP, or fructose 2,6-bisphosphate, and allosterically inhibited by ATP or citrate. Functionally, catalyzes the phosphorylation of D-fructose 6-phosphate to fructose 1,6-bisphosphate by ATP, the first committing step of glycolysis. This chain is ATP-dependent 6-phosphofructokinase 2 (pfkB), found in Aspergillus oryzae (strain ATCC 42149 / RIB 40) (Yellow koji mold).